The primary structure comprises 341 residues: Syntaxin-122 (341 aa).

Met1 is subject to N-acetylmethionine. Disordered regions lie at residues Met1–Ser22 and Leu111–Val137. Over Met1–Lys284 the chain is Cytoplasmic. 2 stretches are compositionally biased toward polar residues: residues Ser8 to His21 and Pro126 to Val137. Residues Cys64–Glu185 are a coiled coil. One can recognise a t-SNARE coiled-coil homology domain in the interval Ile213–Ala275. The helical; Anchor for type IV membrane protein transmembrane segment at Trp285 to Val305 threads the bilayer. Residues Lys306–Arg341 are Vesicular-facing. A disordered region spans residues Gly312–Arg341.

The protein belongs to the syntaxin family. Part of the t-SNARE complex.

The protein resides in the membrane. Its function is as follows. Vesicle trafficking protein that functions in the secretory pathway. In Arabidopsis thaliana (Mouse-ear cress), this protein is Syntaxin-122 (SYP122).